Here is a 176-residue protein sequence, read N- to C-terminus: WASH complex subunit 3 (176 aa).

Residues 47–74 (ETKFVEMERQLQKTEAALIILEAKLASI) adopt a coiled-coil conformation. Disordered stretches follow at residues 84-123 (ATEA…PESV) and 152-176 (KMQS…GQRE). Residues 104-115 (TTEPPTTENPTE) are compositionally biased toward low complexity.

This sequence belongs to the CCDC53 family. Component of the WASH complex.

The protein localises to the early endosome. Functionally, acts at least in part as component of the WASH complex which may regulate wash nucleation-promoting factor (NPF) activity and is required for its membrane targeting during endosomal sorting. During embryogenesis, not involved in the wash-dependent developmental migration of hemocytes anteriorly from the tail. This Drosophila melanogaster (Fruit fly) protein is WASH complex subunit 3.